The primary structure comprises 259 residues: Hydroxyacylglutathione hydrolase (259 aa).

The Zn(2+) site is built by histidine 56, histidine 58, aspartate 60, histidine 61, histidine 112, aspartate 133, and histidine 171.

This sequence belongs to the metallo-beta-lactamase superfamily. Glyoxalase II family. In terms of assembly, monomer. Zn(2+) serves as cofactor.

It catalyses the reaction an S-(2-hydroxyacyl)glutathione + H2O = a 2-hydroxy carboxylate + glutathione + H(+). Its pathway is secondary metabolite metabolism; methylglyoxal degradation; (R)-lactate from methylglyoxal: step 2/2. Its function is as follows. Thiolesterase that catalyzes the hydrolysis of S-D-lactoyl-glutathione to form glutathione and D-lactic acid. The sequence is that of Hydroxyacylglutathione hydrolase from Pseudomonas putida (strain GB-1).